The chain runs to 267 residues: Hydrolase FUB4 (267 aa).

Residues serine 93, aspartate 183, and histidine 243 each act as charge relay system in the active site.

The protein belongs to the AB hydrolase 3 family.

It functions in the pathway mycotoxin biosynthesis. Hydrolase; part of the gene cluster that mediates the biosynthesis of fusaric acid, a mycotoxin with low to moderate toxicity to animals and humans, but with high phytotoxic properties. L-aspartate is suggested as fusaric acid amino acid precursor that is activated and further processed to O-acetyl-L-homoserine by cluster enzymes aspartate kinase FUB3 and homoserine O-acetyltransferase FUB5, as well as enzymes of the primary metabolism. The polyketide synthase (PKS) FUB1 generates the triketide trans-2-hexenal which is presumptively released by the hydrolase FUB4 and linked to the NRPS-bound amino acid precursor by NAD(P)-dependent dehydrogenase FUB6. FUB1, FUB4, and the non-canonical NRPS Fub8 may form an enzyme complex. Further processing of the NRPS-bound intermediate might be carried out by FUB6 and the sulfhydrylase FUB7, enabling a spontaneous electrocyclization to close the carbon backbone of fusaric acid. Dihydrofusaric acid is likely to be released via reduction by the thioester reductase (TR) domain of FUB8 whereupon the final oxidation to fusaric acid may (also) be performed by the FMN-dependent dehydrogenase FUB9. The protein is Hydrolase FUB4 of Fusarium oxysporum f. sp. lycopersici (strain 4287 / CBS 123668 / FGSC 9935 / NRRL 34936) (Fusarium vascular wilt of tomato).